We begin with the raw amino-acid sequence, 272 residues long: Shikimate dehydrogenase (NADP(+)) (272 aa).

Residues 14-16 (SKS) and threonine 61 contribute to the shikimate site. The Proton acceptor role is filled by lysine 65. Glutamate 77 lines the NADP(+) pocket. Asparagine 86 and aspartate 102 together coordinate shikimate. NADP(+) contacts are provided by residues 126 to 130 (GAGGA), 149 to 154 (NRTVSR), and methionine 213. Tyrosine 215 is a binding site for shikimate. Glycine 237 provides a ligand contact to NADP(+).

This sequence belongs to the shikimate dehydrogenase family. As to quaternary structure, homodimer.

The enzyme catalyses shikimate + NADP(+) = 3-dehydroshikimate + NADPH + H(+). It participates in metabolic intermediate biosynthesis; chorismate biosynthesis; chorismate from D-erythrose 4-phosphate and phosphoenolpyruvate: step 4/7. Functionally, involved in the biosynthesis of the chorismate, which leads to the biosynthesis of aromatic amino acids. Catalyzes the reversible NADPH linked reduction of 3-dehydroshikimate (DHSA) to yield shikimate (SA). The chain is Shikimate dehydrogenase (NADP(+)) from Shigella dysenteriae serotype 1 (strain Sd197).